The following is a 31-amino-acid chain: Photosystem II reaction center protein T (31 aa).

A helical membrane pass occupies residues A3–F23.

It belongs to the PsbT family. PSII is composed of 1 copy each of membrane proteins PsbA, PsbB, PsbC, PsbD, PsbE, PsbF, PsbH, PsbI, PsbJ, PsbK, PsbL, PsbM, PsbT, PsbY, PsbZ, Psb30/Ycf12, at least 3 peripheral proteins of the oxygen-evolving complex and a large number of cofactors. It forms dimeric complexes.

The protein localises to the plastid. Its subcellular location is the chloroplast thylakoid membrane. Functionally, found at the monomer-monomer interface of the photosystem II (PS II) dimer, plays a role in assembly and dimerization of PSII. PSII is a light-driven water plastoquinone oxidoreductase, using light energy to abstract electrons from H(2)O, generating a proton gradient subsequently used for ATP formation. This is Photosystem II reaction center protein T from Stigeoclonium helveticum (Green alga).